The chain runs to 292 residues: NADH-cytochrome b5 reductase 1 (292 aa).

The helical transmembrane segment at 12–32 (ALLVVGTAIFAVLVGAKFLGG) threads the bilayer. In terms of domain architecture, FAD-binding FR-type spans 43–148 (TEFQNFVLKE…RGPKGAMVYT (106 aa)). FAD contacts are provided by residues 128–143 (TTLK…GPKG) and 154–191 (HIGM…QVDL).

The protein belongs to the flavoprotein pyridine nucleotide cytochrome reductase family. As to quaternary structure, monomer. Component of the 2-(3-amino-3-carboxypropyl)histidine synthase complex composed of dph1, dph2, dph3 and a NADH-dependent reductase, predominantly cbr1. Requires FAD as cofactor.

It is found in the mitochondrion outer membrane. It carries out the reaction 2 Fe(III)-[cytochrome b5] + NADH = 2 Fe(II)-[cytochrome b5] + NAD(+) + H(+). The catalysed reaction is 2 Fe(3+)-[Dph3] + NADH = 2 Fe(2+)-[Dph3] + NAD(+) + H(+). The protein operates within protein modification; peptidyl-diphthamide biosynthesis. NADH-dependent reductase for dph3 and cytochrome b5. Required for the first step of diphthamide biosynthesis, a post-translational modification of histidine which occurs in elongation factor 2. Dph1 and dph2 transfer a 3-amino-3-carboxypropyl (ACP) group from S-adenosyl-L-methionine (SAM) to a histidine residue, the reaction is assisted by a reduction system comprising dph3 and a NADH-dependent reductase, predominantly cbr1. By reducing dph3, also involved in the formation of the tRNA wobble base modification mcm5s 2U (5-methoxycarbonylmethyl-2-thiouridine), mediated by the elongator complex. The cytochrome b5/NADH cytochrome b5 reductase electron transfer system supports the catalytic activity of several sterol biosynthetic enzymes. This Aspergillus oryzae (strain ATCC 42149 / RIB 40) (Yellow koji mold) protein is NADH-cytochrome b5 reductase 1 (cbr1).